A 222-amino-acid polypeptide reads, in one-letter code: Glutathione S-transferase A5 (222 aa).

A2 carries the N-acetylalanine modification. In terms of domain architecture, GST N-terminal spans 3–83 (EKPKLHYSNA…YIASKYNLYG (81 aa)). Residue K4 is modified to N6-succinyllysine. Residues Y9, R45, 54 to 55 (QV), and 67 to 68 (QT) each bind glutathione. Residues 85 to 208 (DMKERALIDM…QPGSQRKPPM (124 aa)) form the GST C-terminal domain.

This sequence belongs to the GST superfamily. Alpha family. In terms of assembly, homodimer. Expression not detected.

It localises to the cytoplasm. The enzyme catalyses RX + glutathione = an S-substituted glutathione + a halide anion + H(+). The chain is Glutathione S-transferase A5 (GSTA5) from Homo sapiens (Human).